The sequence spans 293 residues: Protease HtpX (293 aa).

2 consecutive transmembrane segments (helical) span residues 4 to 24 and 34 to 54; these read IALF…VLSL and GLMI…LLMS. H139 provides a ligand contact to Zn(2+). E140 is an active-site residue. Position 143 (H143) interacts with Zn(2+). 2 helical membrane-spanning segments follow: residues 158–178 and 193–213; these read VVNT…AGFL and MVYF…ASII. E222 contributes to the Zn(2+) binding site.

It belongs to the peptidase M48B family. The cofactor is Zn(2+).

It localises to the cell inner membrane. This Yersinia pseudotuberculosis serotype O:1b (strain IP 31758) protein is Protease HtpX.